The sequence spans 213 residues: Pyrrolidone-carboxylate peptidase (213 aa).

Catalysis depends on residues Glu-80, Cys-143, and His-165.

It belongs to the peptidase C15 family. In terms of assembly, homotetramer.

It is found in the cytoplasm. It carries out the reaction Release of an N-terminal pyroglutamyl group from a polypeptide, the second amino acid generally not being Pro.. In terms of biological role, removes 5-oxoproline from various penultimate amino acid residues except L-proline. This Erwinia tasmaniensis (strain DSM 17950 / CFBP 7177 / CIP 109463 / NCPPB 4357 / Et1/99) protein is Pyrrolidone-carboxylate peptidase.